A 426-amino-acid polypeptide reads, in one-letter code: Glucan endo-1,3-beta-glucosidase 11 (426 aa).

The signal sequence occupies residues 1–30 (MELTSFHRSSLLFLISLTLIILPTTTTSIG). A glycan (N-linked (GlcNAc...) asparagine) is linked at Asn-112. Residue Glu-121 is the Proton donor of the active site. An N-linked (GlcNAc...) asparagine glycan is attached at Asn-126. Glu-266 (nucleophile) is an active-site residue. The span at 360–372 (GGGTGGGNSSSGG) shows a compositional bias: gly residues. A disordered region spans residues 360–389 (GGGTGGGNSSSGGGRDKSPVFPVSPVAPDS). Asn-367 carries an N-linked (GlcNAc...) asparagine glycan. Ser-398 is lipidated: GPI-anchor amidated serine. A propeptide spans 399-426 (ASPVTGKRKGKGAILSLVVSMLLARHLL) (removed in mature form).

It belongs to the glycosyl hydrolase 17 family.

It is found in the secreted. It localises to the cell wall. The protein resides in the cell membrane. It catalyses the reaction Hydrolysis of (1-&gt;3)-beta-D-glucosidic linkages in (1-&gt;3)-beta-D-glucans.. This is Glucan endo-1,3-beta-glucosidase 11 from Arabidopsis thaliana (Mouse-ear cress).